The chain runs to 327 residues: MTHTLRVIFAGTPEFAAAALAAIHEAGFPVPLVLTQPDRPAGRGMKLQASAVKRYAVEHGMPVAQPPSLRRAGKYPAEAADAIELLRTTPHDVMVVAAYGLLLPQEVLDIPRAGCINIHASLLPRWRGAAPIHRAIEAGDAETGVTLMQMDVGLDTGAMIDEARVAIAPDDTTATLHDRLAADGARLIVDALVRLERDGALPATPQPADGVTYAEKIGKHEAALDWRKPADVLARQVRAFDPFPGGVATLDGAAIKLWAAEPVAARGDAAPGTIVDAAPEGVIVACGSGALRVTQLQKPGGKRLPAREFLAGSPLAAGQRFALPDGA.

Residue 121–124 (SLLP) coordinates (6S)-5,6,7,8-tetrahydrofolate.

It belongs to the Fmt family.

It catalyses the reaction L-methionyl-tRNA(fMet) + (6R)-10-formyltetrahydrofolate = N-formyl-L-methionyl-tRNA(fMet) + (6S)-5,6,7,8-tetrahydrofolate + H(+). In terms of biological role, attaches a formyl group to the free amino group of methionyl-tRNA(fMet). The formyl group appears to play a dual role in the initiator identity of N-formylmethionyl-tRNA by promoting its recognition by IF2 and preventing the misappropriation of this tRNA by the elongation apparatus. In Burkholderia ambifaria (strain ATCC BAA-244 / DSM 16087 / CCUG 44356 / LMG 19182 / AMMD) (Burkholderia cepacia (strain AMMD)), this protein is Methionyl-tRNA formyltransferase.